The primary structure comprises 458 residues: Retinoic acid receptor alpha (458 aa).

Residues 1-87 (MSSKDNTCPP…PPPLPRIYKP (87 aa)) are modulating. Residues 39-78 (GGLPGVQHQPPLSGYSTPSPATIETQSTSSEEIVPSPPTP) are disordered. The span at 52–69 (GYSTPSPATIETQSTSSE) shows a compositional bias: polar residues. NR C4-type zinc fingers lie at residues 88–108 (CFVC…CEGC) and 124–148 (CHRD…LQKC). A DNA-binding region (nuclear receptor) is located at residues 88–153 (CFVCQDKSSG…RLQKCFEVGM (66 aa)). The tract at residues 154-182 (SKESVRNDRNKKKKESPKPEAIESYILSP) is hinge. One can recognise an NR LBD domain in the interval 183–417 (ETQDLIEKVQ…LIQEMLENSE (235 aa)). Positions 407–415 (PLIQEMLEN) match the 9aaTAD motif. The segment at 419–458 (LDTLGGGASSDAPVTPVAPGSCSPSLSPSSTHSSPSTHSP) is disordered. The segment covering 439–458 (SCSPSLSPSSTHSSPSTHSP) has biased composition (low complexity).

Belongs to the nuclear hormone receptor family. NR1 subfamily. In terms of assembly, heterodimer; with an rxr molecule. Binds DNA preferentially as a rar/rxr heterodimer.

Its subcellular location is the nucleus. In terms of biological role, receptor for retinoic acid. Retinoic acid receptors bind as heterodimers to their target response elements in response to their ligands, all-trans or 9-cis retinoic acid, and regulate gene expression in various biological processes. The rar/rxr heterodimers bind to the retinoic acid response elements (RARE) composed of tandem 5'-AGGTCA-3' sites known as DR1-DR5. Required for primary neurogenesis and for anteroposterior neural patterning. The chain is Retinoic acid receptor alpha (rara) from Xenopus laevis (African clawed frog).